The following is a 484-amino-acid chain: N-succinylglutamate 5-semialdehyde dehydrogenase (484 aa).

221–226 provides a ligand contact to NAD(+); sequence GSAAAG. Residues Glu-244 and Cys-278 contribute to the active site.

Belongs to the aldehyde dehydrogenase family. AstD subfamily.

The enzyme catalyses N-succinyl-L-glutamate 5-semialdehyde + NAD(+) + H2O = N-succinyl-L-glutamate + NADH + 2 H(+). It functions in the pathway amino-acid degradation; L-arginine degradation via AST pathway; L-glutamate and succinate from L-arginine: step 4/5. Catalyzes the NAD-dependent reduction of succinylglutamate semialdehyde into succinylglutamate. This chain is N-succinylglutamate 5-semialdehyde dehydrogenase, found in Caulobacter sp. (strain K31).